Here is a 420-residue protein sequence, read N- to C-terminus: Probable glucuronosyltransferase Os04g0398600 (420 aa).

The Cytoplasmic segment spans residues 1–4; the sequence is MGSR. The chain crosses the membrane as a helical; Signal-anchor for type II membrane protein span at residues 5 to 25; that stretch reads TVGWWLLAAAVVLAAAAADSG. Over 26–420 the chain is Lumenal; the sequence is EAERAAEQHS…AGPVGDLKAW (395 aa). Residues N147 and N408 are each glycosylated (N-linked (GlcNAc...) asparagine).

This sequence belongs to the glycosyltransferase 47 family.

The protein localises to the golgi apparatus membrane. In terms of biological role, involved in the synthesis of glucuronoxylan hemicellulose in secondary cell walls. In Oryza sativa subsp. japonica (Rice), this protein is Probable glucuronosyltransferase Os04g0398600.